The sequence spans 327 residues: Beta-ketoacyl-[acyl-carrier-protein] synthase III (327 aa).

Active-site residues include C112 and H253. The ACP-binding stretch occupies residues 254 to 258; that stretch reads QANER. Residue N283 is part of the active site.

The protein belongs to the thiolase-like superfamily. FabH family. As to quaternary structure, homodimer.

Its subcellular location is the cytoplasm. It catalyses the reaction malonyl-[ACP] + acetyl-CoA + H(+) = 3-oxobutanoyl-[ACP] + CO2 + CoA. It participates in lipid metabolism; fatty acid biosynthesis. Its function is as follows. Catalyzes the condensation reaction of fatty acid synthesis by the addition to an acyl acceptor of two carbons from malonyl-ACP. Catalyzes the first condensation reaction which initiates fatty acid synthesis and may therefore play a role in governing the total rate of fatty acid production. Possesses both acetoacetyl-ACP synthase and acetyl transacylase activities. Its substrate specificity determines the biosynthesis of branched-chain and/or straight-chain of fatty acids. The sequence is that of Beta-ketoacyl-[acyl-carrier-protein] synthase III from Chlamydia trachomatis serovar A (strain ATCC VR-571B / DSM 19440 / HAR-13).